We begin with the raw amino-acid sequence, 209 residues long: Uracil phosphoribosyltransferase (209 aa).

5-phospho-alpha-D-ribose 1-diphosphate-binding positions include R79, R104, and 131 to 139; that span reads DPMLATGGS. Residues I194 and 199 to 201 contribute to the uracil site; that span reads GDA. Residue D200 participates in 5-phospho-alpha-D-ribose 1-diphosphate binding.

Belongs to the UPRTase family. It depends on Mg(2+) as a cofactor.

It catalyses the reaction UMP + diphosphate = 5-phospho-alpha-D-ribose 1-diphosphate + uracil. It participates in pyrimidine metabolism; UMP biosynthesis via salvage pathway; UMP from uracil: step 1/1. With respect to regulation, allosterically activated by GTP. Catalyzes the conversion of uracil and 5-phospho-alpha-D-ribose 1-diphosphate (PRPP) to UMP and diphosphate. This Geobacillus kaustophilus (strain HTA426) protein is Uracil phosphoribosyltransferase.